Consider the following 212-residue polypeptide: Deoxyribose-phosphate aldolase (212 aa).

Aspartate 89 (proton donor/acceptor) is an active-site residue. Lysine 151 acts as the Schiff-base intermediate with acetaldehyde in catalysis. Residue lysine 180 is the Proton donor/acceptor of the active site.

It belongs to the DeoC/FbaB aldolase family. DeoC type 1 subfamily.

The protein localises to the cytoplasm. The enzyme catalyses 2-deoxy-D-ribose 5-phosphate = D-glyceraldehyde 3-phosphate + acetaldehyde. It participates in carbohydrate degradation; 2-deoxy-D-ribose 1-phosphate degradation; D-glyceraldehyde 3-phosphate and acetaldehyde from 2-deoxy-alpha-D-ribose 1-phosphate: step 2/2. Catalyzes a reversible aldol reaction between acetaldehyde and D-glyceraldehyde 3-phosphate to generate 2-deoxy-D-ribose 5-phosphate. The polypeptide is Deoxyribose-phosphate aldolase (Clostridium botulinum (strain Langeland / NCTC 10281 / Type F)).